Reading from the N-terminus, the 203-residue chain is Orotate phosphoribosyltransferase (203 aa).

5-phospho-alpha-D-ribose 1-diphosphate-binding positions include Arg-94, Lys-98, His-100, and 120-128 (EDLISTGGS). Ser-124 is a binding site for orotate.

It belongs to the purine/pyrimidine phosphoribosyltransferase family. PyrE subfamily. As to quaternary structure, homodimer. It depends on Mg(2+) as a cofactor.

It carries out the reaction orotidine 5'-phosphate + diphosphate = orotate + 5-phospho-alpha-D-ribose 1-diphosphate. The protein operates within pyrimidine metabolism; UMP biosynthesis via de novo pathway; UMP from orotate: step 1/2. Functionally, catalyzes the transfer of a ribosyl phosphate group from 5-phosphoribose 1-diphosphate to orotate, leading to the formation of orotidine monophosphate (OMP). This chain is Orotate phosphoribosyltransferase, found in Staphylococcus epidermidis (strain ATCC 35984 / DSM 28319 / BCRC 17069 / CCUG 31568 / BM 3577 / RP62A).